Reading from the N-terminus, the 189-residue chain is Elongation factor P (189 aa).

At K34 the chain carries N6-(3,6-diaminohexanoyl)-5-hydroxylysine.

The protein belongs to the elongation factor P family. May be beta-lysylated on the epsilon-amino group of Lys-34 by the combined action of EpmA and EpmB, and then hydroxylated on the C5 position of the same residue by EpmC (if this protein is present). Lysylation is critical for the stimulatory effect of EF-P on peptide-bond formation. The lysylation moiety may extend toward the peptidyltransferase center and stabilize the terminal 3-CCA end of the tRNA. Hydroxylation of the C5 position on Lys-34 may allow additional potential stabilizing hydrogen-bond interactions with the P-tRNA.

The protein resides in the cytoplasm. Its pathway is protein biosynthesis; polypeptide chain elongation. Involved in peptide bond synthesis. Alleviates ribosome stalling that occurs when 3 or more consecutive Pro residues or the sequence PPG is present in a protein, possibly by augmenting the peptidyl transferase activity of the ribosome. Modification of Lys-34 is required for alleviation. This chain is Elongation factor P, found in Alcanivorax borkumensis (strain ATCC 700651 / DSM 11573 / NCIMB 13689 / SK2).